Reading from the N-terminus, the 522-residue chain is Maturase K (522 aa).

The protein belongs to the intron maturase 2 family. MatK subfamily.

The protein localises to the plastid. The protein resides in the chloroplast. In terms of biological role, usually encoded in the trnK tRNA gene intron. Probably assists in splicing its own and other chloroplast group II introns. In Watsonia angusta, this protein is Maturase K.